The following is a 181-amino-acid chain: Dual-action ribosomal maturation protein DarP (181 aa).

The interval 1 to 23 is disordered; that stretch reads MTGIKKPMSQYQDDNELEDWGPS.

Belongs to the DarP family.

It is found in the cytoplasm. Its function is as follows. Member of a network of 50S ribosomal subunit biogenesis factors which assembles along the 30S-50S interface, preventing incorrect 23S rRNA structures from forming. Promotes peptidyl transferase center (PTC) maturation. This Aeromonas salmonicida (strain A449) protein is Dual-action ribosomal maturation protein DarP.